Here is a 464-residue protein sequence, read N- to C-terminus: Glutamyl-tRNA reductase (464 aa).

Residues 47-50 (TCNR), Ser-145, 150-152 (EPQ), and Gln-156 each bind substrate. Cys-48 acts as the Nucleophile in catalysis. NADP(+) is bound at residue 225–230 (AAGEMN).

It belongs to the glutamyl-tRNA reductase family. In terms of assembly, homodimer.

It carries out the reaction (S)-4-amino-5-oxopentanoate + tRNA(Glu) + NADP(+) = L-glutamyl-tRNA(Glu) + NADPH + H(+). It participates in porphyrin-containing compound metabolism; protoporphyrin-IX biosynthesis; 5-aminolevulinate from L-glutamyl-tRNA(Glu): step 1/2. Catalyzes the NADPH-dependent reduction of glutamyl-tRNA(Glu) to glutamate 1-semialdehyde (GSA). This chain is Glutamyl-tRNA reductase, found in Psychrobacter cryohalolentis (strain ATCC BAA-1226 / DSM 17306 / VKM B-2378 / K5).